The primary structure comprises 204 residues: Large ribosomal subunit protein uL4 (204 aa).

Residues 53-77 form a disordered region; sequence ISDVSGTTAKPYSQKRTGRARQGSL. Polar residues predominate over residues 56–67; that stretch reads VSGTTAKPYSQK.

The protein belongs to the universal ribosomal protein uL4 family. Part of the 50S ribosomal subunit.

One of the primary rRNA binding proteins, this protein initially binds near the 5'-end of the 23S rRNA. It is important during the early stages of 50S assembly. It makes multiple contacts with different domains of the 23S rRNA in the assembled 50S subunit and ribosome. Functionally, forms part of the polypeptide exit tunnel. The protein is Large ribosomal subunit protein uL4 of Wolbachia sp. subsp. Brugia malayi (strain TRS).